A 456-amino-acid chain; its full sequence is tRNA modification GTPase MnmE (456 aa).

R23, E80, and K122 together coordinate (6S)-5-formyl-5,6,7,8-tetrahydrofolate. Residues 218–380 (AKRIVIVGPP…LKKHLSNRQK (163 aa)) enclose the TrmE-type G domain. Residue N228 coordinates K(+). GTP-binding positions include 228–233 (NAGKSS), 247–253 (TDLPGTT), and 272–275 (DTAG). S232 lines the Mg(2+) pocket. T247, L249, and T252 together coordinate K(+). T253 is a binding site for Mg(2+). K456 is a (6S)-5-formyl-5,6,7,8-tetrahydrofolate binding site.

Belongs to the TRAFAC class TrmE-Era-EngA-EngB-Septin-like GTPase superfamily. TrmE GTPase family. Homodimer. Heterotetramer of two MnmE and two MnmG subunits. It depends on K(+) as a cofactor.

The protein resides in the cytoplasm. Its function is as follows. Exhibits a very high intrinsic GTPase hydrolysis rate. Involved in the addition of a carboxymethylaminomethyl (cmnm) group at the wobble position (U34) of certain tRNAs, forming tRNA-cmnm(5)s(2)U34. This is tRNA modification GTPase MnmE from Buchnera aphidicola subsp. Schizaphis graminum (strain Sg).